Consider the following 500-residue polypeptide: MVLLIGDGLWSGVIFTALFLLLVDLMHRRKFWRARYPPGPMPLPGLGNLLQVDFENMPYSLYKFQQRYGDVFSLQMAWKPVVVINGLKAVREVLVNCGEDTADRPPVPIFNHLGYRPKSQGVVFARYGPQWREQRRFSVSTMRDFGVGKKSLEQWVTEEAGHLCDAFTQEAGHPFNPITLLNKSVCNVISSLIYAHRFDYEDPFFNKLLKTLQESFGEDSGFIAEVLNAVPVLLRIPGLPGKAFPKLTAFMDSLYKMLIEHKTTWDPAQPPRGLTDAFLAEVEKAKGRPESSFNDENLHVVVADLFIAGMVTTSTTLSWALLLMILHPDVQSRVQQEIDDVIGQVRRPEMADQARMPYTNAVIHEVQRFGDIAPVNVPHMTSRDVEVQGFLIPKGTTLIPNLSSVLKDETVWEKPLHFHPEHFLDAQGRFVKQEAFMPFSAGRRACLGEPLARMELFLFFTCLLQRFSFSVPAGQPRPSDQGVFALPVTPTPYELCAVVR.

Cys-446 contributes to the heme binding site.

The protein belongs to the cytochrome P450 family. Heme serves as cofactor.

Its subcellular location is the endoplasmic reticulum membrane. The protein resides in the microsome membrane. This Mesocricetus auratus (Golden hamster) protein is Cytochrome P450 2D20 (CYP2D20).